A 488-amino-acid chain; its full sequence is 3-octaprenyl-4-hydroxybenzoate carboxy-lyase (488 aa).

Residue N172 participates in Mn(2+) binding. Residues 175 to 177 (IYR), 189 to 191 (RWL), and 194 to 195 (RG) each bind prenylated FMN. E238 serves as a coordination point for Mn(2+). The active-site Proton donor is the D287.

This sequence belongs to the UbiD family. Homohexamer. It depends on prenylated FMN as a cofactor. Mn(2+) serves as cofactor.

It localises to the cell membrane. It catalyses the reaction a 4-hydroxy-3-(all-trans-polyprenyl)benzoate + H(+) = a 2-(all-trans-polyprenyl)phenol + CO2. It participates in cofactor biosynthesis; ubiquinone biosynthesis. In terms of biological role, catalyzes the decarboxylation of 3-octaprenyl-4-hydroxy benzoate to 2-octaprenylphenol, an intermediate step in ubiquinone biosynthesis. This is 3-octaprenyl-4-hydroxybenzoate carboxy-lyase from Pseudomonas syringae pv. tomato (strain ATCC BAA-871 / DC3000).